We begin with the raw amino-acid sequence, 362 residues long: 3-dehydroquinate synthase (362 aa).

Residues 71–76 (DGEQYK), 105–109 (GVIGD), 129–130 (TT), Lys142, Lys151, and 169–172 (CLKT) contribute to the NAD(+) site. Zn(2+) is bound by residues Glu184, His247, and His264.

Belongs to the sugar phosphate cyclases superfamily. Dehydroquinate synthase family. The cofactor is Co(2+). It depends on Zn(2+) as a cofactor. Requires NAD(+) as cofactor.

Its subcellular location is the cytoplasm. It catalyses the reaction 7-phospho-2-dehydro-3-deoxy-D-arabino-heptonate = 3-dehydroquinate + phosphate. It functions in the pathway metabolic intermediate biosynthesis; chorismate biosynthesis; chorismate from D-erythrose 4-phosphate and phosphoenolpyruvate: step 2/7. In terms of biological role, catalyzes the conversion of 3-deoxy-D-arabino-heptulosonate 7-phosphate (DAHP) to dehydroquinate (DHQ). This is 3-dehydroquinate synthase from Salmonella schwarzengrund (strain CVM19633).